Here is a 160-residue protein sequence, read N- to C-terminus: Variant surface antigen C (160 aa).

The signal sequence occupies residues 1 to 29 (MKKSIFSKKLLVSFGSLVALASIPLIAIS). Cys-30 carries the N-palmitoyl cysteine lipid modification. Cys-30 is lipidated: S-diacylglycerol cysteine. The segment at 32–160 (QTNTDKSQQP…SSESGSQKTT (129 aa)) is disordered. Low complexity-rich tracts occupy residues 38–54 (SQQP…QSGT) and 62–87 (SGTS…QTET). 6 tandem repeats follow at residues 86–97 (ETAPKSPESGSQ), 98–109 (EATPKSPESGSQ), 110–121 (EATPKSPESGSQ), 122–133 (EAAPKSSESGSQ), 134–145 (EAAPKSSESGSQ), and 146–157 (EAAPKSSESGSQ). The 6 X 12 AA tandem repeats stretch occupies residues 86-157 (ETAPKSPESG…APKSSESGSQ (72 aa)). Over residues 93–160 (ESGSQEATPK…SSESGSQKTT (68 aa)) the composition is skewed to polar residues.

It is found in the cell membrane. Responsible for the antigenic diversity for host adaptation. The sequence is that of Variant surface antigen C (vlpC) from Mesomycoplasma hyorhinis (Mycoplasma hyorhinis).